A 427-amino-acid polypeptide reads, in one-letter code: Rhodocoxin reductase (427 aa).

Residue 2-34 (SIVIIGSGQAGFEAAVSLRSHGFSGTITLVGDE) participates in FAD binding. 144–172 (SLVVIGAGFIGLEVAAAARKKGLDVTVVE) contributes to the NAD(+) binding site.

Belongs to the FAD-dependent oxidoreductase family. FAD is required as a cofactor.

The degradation of the thiocarbamate herbicide EPTC by cytochrome CYP116 (thcB) requires the participation of a flavoprotein, rhodocoxin reductase, and an iron-sulfur protein, rhodocoxin, to mediate the transfer of electrons from NADH to P450 for oxygen activation. This chain is Rhodocoxin reductase (thcD), found in Rhodococcus erythropolis (Arthrobacter picolinophilus).